The chain runs to 46 residues: uncharacterized protein (46 aa).

The protein localises to the plastid. The protein resides in the chloroplast. This is an uncharacterized protein from Trieres chinensis (Marine centric diatom).